Reading from the N-terminus, the 76-residue chain is Sec-independent protein translocase protein TatA (76 aa).

The helical transmembrane segment at 1-21 (MGGISIWQLLIIVAIIVLLFG) threads the bilayer. A disordered region spans residues 43–76 (MADDKSQPQDASFEKVEAKEAASTEQKAKEKEQA).

This sequence belongs to the TatA/E family. In terms of assembly, the Tat system comprises two distinct complexes: a TatABC complex, containing multiple copies of TatA, TatB and TatC subunits, and a separate TatA complex, containing only TatA subunits. Substrates initially bind to the TatABC complex, which probably triggers association of the separate TatA complex to form the active translocon.

It localises to the cell inner membrane. In terms of biological role, part of the twin-arginine translocation (Tat) system that transports large folded proteins containing a characteristic twin-arginine motif in their signal peptide across membranes. TatA could form the protein-conducting channel of the Tat system. The chain is Sec-independent protein translocase protein TatA from Actinobacillus pleuropneumoniae serotype 5b (strain L20).